The chain runs to 269 residues: tRNA uridine(34) hydroxylase (269 aa).

One can recognise a Rhodanese domain in the interval 122–216 (QDPEVVLIDV…YLEAIAPEEN (95 aa)). The Cysteine persulfide intermediate role is filled by cysteine 176.

It belongs to the TrhO family.

It catalyses the reaction uridine(34) in tRNA + AH2 + O2 = 5-hydroxyuridine(34) in tRNA + A + H2O. In terms of biological role, catalyzes oxygen-dependent 5-hydroxyuridine (ho5U) modification at position 34 in tRNAs. The sequence is that of tRNA uridine(34) hydroxylase from Synechococcus elongatus (strain ATCC 33912 / PCC 7942 / FACHB-805) (Anacystis nidulans R2).